Reading from the N-terminus, the 598-residue chain is uncharacterized protein (598 aa).

Positions 1–19 (MSVPLRFSTPSSSPSASDN) are enriched in low complexity. Disordered stretches follow at residues 1–54 (MSVP…MRPK), 139–176 (QKNQ…PNWK), and 194–279 (EAQL…ITMP). The Cytoplasmic portion of the chain corresponds to 1–313 (MSVPLRFSTP…CKIRHFFREG (313 aa)). Polar residues predominate over residues 30–48 (ELDTFNTTDVPRRVNTTKA). The span at 147–165 (RANSRVNSRANSRANSSVS) shows a compositional bias: low complexity. Composition is skewed to polar residues over residues 218-242 (FSLQ…SSAI) and 255-276 (PRNN…SQDI). The chain crosses the membrane as a helical span at residues 314 to 334 (FAEFLGTLVLVVFGVGSNLQA). Over 335–346 (TVTNGAGGSFES) the chain is Extracellular. Residues 347 to 367 (LSFAWGFGCMLGVYIAGGISG) form a helical membrane-spanning segment. Topologically, residues 368 to 388 (GHVNPAVTISLAIFRKFPWYK) are cytoplasmic. Positions 371 to 373 (NPA) match the NPA 1 motif. A helical transmembrane segment spans residues 389–409 (VPIYIFFQIWGAFFGGALAYG). Residues 410-444 (YHWSSITEFEGGKDIRTPATGGCLYTNPKPYVTWR) are Extracellular-facing. Residues 445 to 465 (NAFFDEFIGTAVLVGCLFAIL) traverse the membrane as a helical segment. At 466-473 (DDTNSPPT) the chain is on the cytoplasmic side. A helical membrane pass occupies residues 474 to 494 (QGMTAFIVGLLIAAIGMALGY). Residues 495 to 532 (QTSFTLNPARDLGPRMFAWWIGYGPHSFHLYHWWWTWG) lie on the Extracellular side of the membrane. The NPA 2 signature appears at 501–503 (NPA). Residues 533 to 553 (AWGGTIGGGIAGGLIYDLVIF) traverse the membrane as a helical segment. At 554-598 (TGPESPLNYPDNGFIDKKVHQITAKFEKEEEVENLEKTDSPIENN) the chain is on the cytoplasmic side.

Belongs to the MIP/aquaporin (TC 1.A.8) family.

It localises to the membrane. This is an uncharacterized protein from Schizosaccharomyces pombe (strain 972 / ATCC 24843) (Fission yeast).